The sequence spans 161 residues: Large ribosomal subunit protein uL30m (161 aa).

Residues 1-34 (MAGILRLVVQRPPGGLQTVTKGVESLIGTDWIRH) constitute a mitochondrion transit peptide.

This sequence belongs to the universal ribosomal protein uL30 family. As to quaternary structure, component of the mitochondrial ribosome large subunit (39S) which comprises a 16S rRNA and about 50 distinct proteins.

Its subcellular location is the mitochondrion. This is Large ribosomal subunit protein uL30m (MRPL30) from Macaca fascicularis (Crab-eating macaque).